A 393-amino-acid chain; its full sequence is Cysteine protease ATG4B (393 aa).

Met1 is modified (N-acetylmethionine). A Phosphoserine modification is found at Ser34. Catalysis depends on Cys74, which acts as the Nucleophile. Cys189 carries the S-nitrosocysteine modification. Catalysis depends on residues Asp278 and His280. S-nitrosocysteine is present on residues Cys292 and Cys301. Cys292 and Cys361 are oxidised to a cystine. Phosphoserine occurs at positions 316 and 383. Residues 388-391 (FEIL) carry the LIR motif. Ser392 carries the phosphoserine modification.

Belongs to the peptidase C54 family. Interacts with PFKP; promoting phosphorylation of ATG4B at Ser-34. Interacts with GBP7. Post-translationally, phosphorylation at Ser-383 and Ser-392 promotes autophagy by increasing protein delipidation activity without affecting proteolytic activation of ATG8 proteins. Phosphorylation at Ser-316 by ULK1 inhibits autophagy by decreasing both proteolytic activation and delipidation activities. Phosphorylation at Ser-316 is dephosphorylated by protein phosphatase 2A (PP2A). Phosphorylation at Ser-34 by AKT2 promotes its hydrolase activity, leading to increased proteolytic activation and delipidation of ATG8 family proteins. Phosphorylation at Ser-34 by AKT1 promotes mitochondrial localization and inhibition of the F1F0-ATP synthase activity, leading to elevation of mitochondrial reactive oxygen species (ROS). In terms of processing, ubiquitinated by RNF5, leading to its degradation by the proteasome. S-nitrosylation at Cys-189 and Cys-292 in response to high glucose decreases both proteolytic activation and delipidation activities. Post-translationally, O-glycosylated by OGT, leading to increase protease activity, thereby promoting the proteolytic activation of ATG8 family proteins. In terms of processing, forms reversible intrachain disulfide bonds in response to oxidative stress. Forms interchain disulfide bonds, leading to formation of homooligomers in response to oxidation.

The protein resides in the cytoplasm. It is found in the cytosol. The protein localises to the cytoplasmic vesicle. Its subcellular location is the autophagosome. It localises to the endoplasmic reticulum. The protein resides in the mitochondrion. It carries out the reaction [protein]-C-terminal L-amino acid-glycyl-phosphatidylethanolamide + H2O = [protein]-C-terminal L-amino acid-glycine + a 1,2-diacyl-sn-glycero-3-phosphoethanolamine. It catalyses the reaction [protein]-C-terminal L-amino acid-glycyl-phosphatidylserine + H2O = [protein]-C-terminal L-amino acid-glycine + a 1,2-diacyl-sn-glycero-3-phospho-L-serine. With respect to regulation, inhibited by N-ethylmaleimide. Redox-regulated during autophagy since reducing conditions activate ATG4A whereas an oxidizing environment such as the presence of H(2)O(2) inhibits its activity. The cysteine protease activity compounds is inhibited by styrylquinoline compounds 4-28 and LV-320. Cysteine protease that plays a key role in autophagy by mediating both proteolytic activation and delipidation of ATG8 family proteins. Required for canonical autophagy (macroautophagy), non-canonical autophagy as well as for mitophagy. The protease activity is required for proteolytic activation of ATG8 family proteins: cleaves the C-terminal amino acid of ATG8 proteins MAP1LC3A, MAP1LC3B, MAP1LC3C, GABARAPL1, GABARAPL2 and GABARAP, to reveal a C-terminal glycine. Exposure of the glycine at the C-terminus is essential for ATG8 proteins conjugation to phosphatidylethanolamine (PE) and insertion to membranes, which is necessary for autophagy. Protease activity is also required to counteract formation of high-molecular weight conjugates of ATG8 proteins (ATG8ylation): acts as a deubiquitinating-like enzyme that removes ATG8 conjugated to other proteins, such as ATG3. In addition to the protease activity, also mediates delipidation of ATG8 family proteins. Catalyzes delipidation of PE-conjugated forms of ATG8 proteins during macroautophagy. Also involved in non-canonical autophagy, a parallel pathway involving conjugation of ATG8 proteins to single membranes at endolysosomal compartments, by catalyzing delipidation of ATG8 proteins conjugated to phosphatidylserine (PS). Compared to other members of the family (ATG4A, ATG4C or ATG4C), constitutes the major protein for proteolytic activation of ATG8 proteins, while it displays weaker delipidation activity than other ATG4 paralogs. Involved in phagophore growth during mitophagy independently of its protease activity and of ATG8 proteins: acts by regulating ATG9A trafficking to mitochondria and promoting phagophore-endoplasmic reticulum contacts during the lipid transfer phase of mitophagy. The polypeptide is Cysteine protease ATG4B (Mus musculus (Mouse)).